Consider the following 473-residue polypeptide: MKTLYSLRRFYHVETLFNGTLAVTGRDQETTGFAWWAGNARLINLSGKLLGAHVAHAGLIVFWAGAMNLFEVAHFVPEKPMYEQGLILLPHLATLGWGVGPGGEVTDTFPYFVSGVLHLISSAVLGFGGIYHALLGPETLEESFPFFGYVWKDRNKMTTILGIHLILLGLGAFLLVFKALYFGGVYDTWAPGGGDVRKITNLTLSPSILFGYLLKSPFGGEGWIVSVDDLEDIIGGHVWLGSICILGGIWHILTKPFAWARRALVWSGEAYLSYSLGALSAFGFIACCFVCFNNTAYPSEFYGPTGPEASQAQAFTFLVRDQRLGANVGSAQGPTGLGKYLMRSPTGEVIFGGETMRFWDLRAPWLEPLRGPNGLDLSRLKKDIQPWQERRSAEYMTHAPLGSLNSVGGVATEINAVNYVSPRSWLATSHFVLGFFFFVGHLWHAGRARAAAAGFEKGIDRDFEPVLSMTPLN.

Positions 1–14 (MKTLYSLRRFYHVE) are excised as a propeptide. Threonine 15 is modified (N-acetylthreonine). Residue threonine 15 is modified to Phosphothreonine. 5 helical membrane passes run 69-93 (LFEV…PHLA), 134-155 (LLGP…KDRN), 178-200 (KALY…RKIT), 255-275 (KPFA…LSYS), and 291-312 (CFNN…ASQA). [CaMn4O5] cluster is bound at residue glutamate 367. The chain crosses the membrane as a helical span at residues 447–471 (RARAAAAGFEKGIDRDFEPVLSMTP).

It belongs to the PsbB/PsbC family. PsbC subfamily. PSII is composed of 1 copy each of membrane proteins PsbA, PsbB, PsbC, PsbD, PsbE, PsbF, PsbH, PsbI, PsbJ, PsbK, PsbL, PsbM, PsbT, PsbX, PsbY, PsbZ, Psb30/Ycf12, at least 3 peripheral proteins of the oxygen-evolving complex and a large number of cofactors. It forms dimeric complexes. Requires Binds multiple chlorophylls and provides some of the ligands for the Ca-4Mn-5O cluster of the oxygen-evolving complex. It may also provide a ligand for a Cl- that is required for oxygen evolution. PSII binds additional chlorophylls, carotenoids and specific lipids. as cofactor.

It is found in the plastid. Its subcellular location is the chloroplast thylakoid membrane. One of the components of the core complex of photosystem II (PSII). It binds chlorophyll and helps catalyze the primary light-induced photochemical processes of PSII. PSII is a light-driven water:plastoquinone oxidoreductase, using light energy to abstract electrons from H(2)O, generating O(2) and a proton gradient subsequently used for ATP formation. This is Photosystem II CP43 reaction center protein from Jasminum nudiflorum (Winter jasmine).